A 1171-amino-acid chain; its full sequence is Pyruvate:ferredoxin oxidoreductase (1171 aa).

Positions 29 and 112 each coordinate pyruvate. Residues 424-428 (SDGTV), lysine 456, asparagine 556, and asparagine 598 contribute to the CoA site. 4Fe-4S ferredoxin-type domains follow at residues 677-706 (NIPQ…PYLA) and 733-764 (FRIQ…MVPL). Positions 686, 689, 692, 696, 742, 745, 748, 752, 809, and 812 each coordinate [4Fe-4S] cluster. Thiamine diphosphate contacts are provided by residues glutamate 814, cysteine 837, 967–969 (DGW), and 995–1000 (TEVYSN). Cysteine 837 serves as a coordination point for [4Fe-4S] cluster. Mg(2+) contacts are provided by aspartate 967, threonine 995, and valine 997. Asparagine 1000 serves as a coordination point for pyruvate. Cysteine 1075 lines the [4Fe-4S] cluster pocket.

The protein belongs to the pyruvate:ferredoxin/flavodoxin oxidoreductase family. Homodimer. The cofactor is [4Fe-4S] cluster. Thiamine diphosphate is required as a cofactor. It depends on Mg(2+) as a cofactor.

The enzyme catalyses 2 oxidized [2Fe-2S]-[ferredoxin] + pyruvate + CoA = 2 reduced [2Fe-2S]-[ferredoxin] + acetyl-CoA + CO2 + H(+). Catalyzes the oxidative decarboxylation of pyruvate to acetyl-CoA and carbon dioxide. The two electrons that are generated as a result of pyruvate decarboxylation are used in the reduction of low potential ferredoxins, which provide reducing equivalents for central metabolism. Also catalyzes the reverse reaction, i.e. the synthesis of pyruvate from acetyl-CoA and carbon dioxide. Appears to function physiologically in both directions. The oxidation of pyruvate by PFOR is required to connect glycolysis and the Wood-Ljungdahl pathway of reductive acetogenesis. The conversion of acetyl-CoA to pyruvate links the Wood-Ljungdahl pathway of autotrophic CO2 fixation to the reductive tricarboxylic acid cycle. Can use methyl viologen as electron carrier in vitro. The chain is Pyruvate:ferredoxin oxidoreductase from Moorella thermoacetica (strain ATCC 39073 / JCM 9320).